Consider the following 294-residue polypeptide: Nucleotide-binding protein Adeh_0147 (294 aa).

17-24 (GVSGSGKS) lines the ATP pocket. Residue 68–71 (DARE) coordinates GTP.

Belongs to the RapZ-like family.

Functionally, displays ATPase and GTPase activities. This Anaeromyxobacter dehalogenans (strain 2CP-C) protein is Nucleotide-binding protein Adeh_0147.